The primary structure comprises 204 residues: MKKYLNLTALLLVGISNVTWANAVNELQNRLNKIDVLSADYTQQVTDAQGKKIQQGSGKIQLKRPNLFRMDNETPQESQIIADGKTLWFYDPFVEQVTANWVEDTLSDTPFVLLTSNNPSHWQQYIVEQKSDTFIIKPKSKKSTIKQFNIRIEKDGVLKNFSTIENDGQSNLYILRKITNPALNDAIFTFTLPKGVEFDDQRKK.

The signal sequence occupies residues 1–21 (MKKYLNLTALLLVGISNVTWA).

Belongs to the LolA family. In terms of assembly, monomer.

It localises to the periplasm. Its function is as follows. Participates in the translocation of lipoproteins from the inner membrane to the outer membrane. Only forms a complex with a lipoprotein if the residue after the N-terminal Cys is not an aspartate (The Asp acts as a targeting signal to indicate that the lipoprotein should stay in the inner membrane). In Histophilus somni (strain 129Pt) (Haemophilus somnus), this protein is Outer-membrane lipoprotein carrier protein.